A 270-amino-acid polypeptide reads, in one-letter code: Putative phosphatase YxeH (270 aa).

The Nucleophile role is filled by Asp8. Asp8 contacts Mg(2+). Residue Met9 participates in phosphate binding. Residue Asp10 participates in Mg(2+) binding. Phosphate-binding positions include 42–43 and Lys196; that span reads TG. Residue Asp219 coordinates Mg(2+). Phosphate is bound at residue Asn222.

It belongs to the HAD-like hydrolase superfamily. Cof family. Mg(2+) serves as cofactor.

In Bacillus subtilis (strain 168), this protein is Putative phosphatase YxeH (yxeH).